The following is a 388-amino-acid chain: L-arabinitol 4-dehydrogenase (388 aa).

Zn(2+)-binding residues include Cys55, His80, Glu81, Cys110, Cys113, Cys116, Cys124, and Glu165. Residues 192 to 193, Asp213, Arg218, Ile293, and 317 to 319 each bind NAD(+); these read PI and QYR.

It belongs to the zinc-containing alcohol dehydrogenase family. Homotetramer. Zn(2+) serves as cofactor.

The catalysed reaction is L-arabinitol + NAD(+) = L-xylulose + NADH + H(+). The protein operates within carbohydrate degradation; L-arabinose degradation via L-arabinitol; D-xylulose 5-phosphate from L-arabinose (fungal route): step 2/5. In terms of biological role, catalyzes the NAD-dependent oxidation of L-arabinitol to L-xylulose in the fungal L-arabinose catabolic pathway. L-arabinose catabolism is important for using plant material as a carbon source. NADP cannot act as a cosubstrate. In Talaromyces emersonii (Thermophilic fungus), this protein is L-arabinitol 4-dehydrogenase (lad).